Consider the following 448-residue polypeptide: Probable glycine dehydrogenase (decarboxylating) subunit 1 (448 aa).

Belongs to the GcvP family. N-terminal subunit subfamily. The glycine cleavage system is composed of four proteins: P, T, L and H. In this organism, the P 'protein' is a heterodimer of two subunits.

The catalysed reaction is N(6)-[(R)-lipoyl]-L-lysyl-[glycine-cleavage complex H protein] + glycine + H(+) = N(6)-[(R)-S(8)-aminomethyldihydrolipoyl]-L-lysyl-[glycine-cleavage complex H protein] + CO2. The glycine cleavage system catalyzes the degradation of glycine. The P protein binds the alpha-amino group of glycine through its pyridoxal phosphate cofactor; CO(2) is released and the remaining methylamine moiety is then transferred to the lipoamide cofactor of the H protein. The polypeptide is Probable glycine dehydrogenase (decarboxylating) subunit 1 (Listeria monocytogenes serotype 4a (strain HCC23)).